Consider the following 332-residue polypeptide: Anthranilate phosphoribosyltransferase (332 aa).

5-phospho-alpha-D-ribose 1-diphosphate is bound by residues glycine 79, 82–83, serine 87, 89–92, 107–115, and serine 119; these read GD, NIST, and KHGNRSVSS. Glycine 79 provides a ligand contact to anthranilate. Serine 91 contributes to the Mg(2+) binding site. Asparagine 110 is a binding site for anthranilate. Residue arginine 165 participates in anthranilate binding. The Mg(2+) site is built by aspartate 223 and glutamate 224.

This sequence belongs to the anthranilate phosphoribosyltransferase family. Homodimer. Requires Mg(2+) as cofactor.

The catalysed reaction is N-(5-phospho-beta-D-ribosyl)anthranilate + diphosphate = 5-phospho-alpha-D-ribose 1-diphosphate + anthranilate. The protein operates within amino-acid biosynthesis; L-tryptophan biosynthesis; L-tryptophan from chorismate: step 2/5. Functionally, catalyzes the transfer of the phosphoribosyl group of 5-phosphorylribose-1-pyrophosphate (PRPP) to anthranilate to yield N-(5'-phosphoribosyl)-anthranilate (PRA). The polypeptide is Anthranilate phosphoribosyltransferase (Erwinia tasmaniensis (strain DSM 17950 / CFBP 7177 / CIP 109463 / NCPPB 4357 / Et1/99)).